The following is a 432-amino-acid chain: Amino acid transporter ANT1 (432 aa).

The disordered stretch occupies residues 1-30; that stretch reads MAIKDLTATTGDSSLPLIKSPPSETTGGDR. Residues 1–35 lie on the Cytoplasmic side of the membrane; that stretch reads MAIKDLTATTGDSSLPLIKSPPSETTGGDRTSALQ. The helical transmembrane segment at 36–56 threads the bilayer; that stretch reads TLGNIIVSIVGTGVLGLPYAF. The Lumenal portion of the chain corresponds to 57-62; it reads RIAGWL. Residues 63-83 traverse the membrane as a helical segment; the sequence is AGSLGVIIVGFATYYCMLLLI. Residues 84-115 are Cytoplasmic-facing; sequence QCRDKLESEEGEEESKTYGDLGFKCMGTKGRY. Residues 116 to 136 form a helical membrane-spanning segment; that stretch reads LTEFLIFTAQCGGSVAYLVFI. Residues 137–147 are Lumenal-facing; it reads GRNLSSIFSSY. A helical transmembrane segment spans residues 148 to 168; it reads GLSMVSFILILVPIEVGLSWI. Topologically, residues 169–172 are cytoplasmic; that stretch reads TSLS. The helical transmembrane segment at 173-193 threads the bilayer; it reads ALSPFSIFADICNIIAMCFVV. Topologically, residues 194 to 219 are lumenal; that stretch reads KENVEMVIEGDFSFSDRTAISSTIGG. The helical transmembrane segment at 220–240 threads the bilayer; that stretch reads LPFAGGVAVFCFEGFAMTLAL. Residues 241 to 256 lie on the Cytoplasmic side of the membrane; sequence ESSMREREAFPKLLAK. Residues 257–277 form a helical membrane-spanning segment; it reads VLAGITFVYVLFGFCGYMAYG. Residues 278 to 292 lie on the Lumenal side of the membrane; the sequence is DQTKDIITLNLPNNW. Residues 293-313 form a helical membrane-spanning segment; that stretch reads SAIAVQIGLCVGLTFTFPIMV. The Cytoplasmic segment spans residues 314-353; sequence HPLNEIIEQKLKRIDWLQKHHNGYSNETGSVSKFAIFTTR. Residues 354–374 form a helical membrane-spanning segment; it reads TLLVVGLAAIASLVPGFGTFA. Topologically, residues 375-379 are lumenal; that stretch reads SLVGS. Residues 380 to 400 form a helical membrane-spanning segment; the sequence is TLCALISFVLPASYHLTLLGP. At 401–410 the chain is on the cytoplasmic side; that stretch reads SLNVWNKSID. Residues 411 to 431 traverse the membrane as a helical segment; that stretch reads VFIVICGLIFAVYGTYNTIVG. Residue valine 432 is a topological domain, lumenal.

The protein belongs to the amino acid/polyamine transporter 2 family. Amino acid/auxin permease (AAAP) (TC 2.A.18.8) subfamily. In terms of tissue distribution, ubiquitous. Highly expressed in flowers and cauline leaves and at lower levels in stems, leaves and roots.

Its subcellular location is the endoplasmic reticulum membrane. Its function is as follows. Translocates aromatic and neutral amino acids such as tyrosine, tryptophan, phenylalanine, histidine, proline, leucine, valine, glutamine, as well as arginine. Transports the auxins indole-3-acetic acid (IAA) and 2,4-dichlorophenoxyacetic acid (2,4-D). In Arabidopsis thaliana (Mouse-ear cress), this protein is Amino acid transporter ANT1.